A 1563-amino-acid chain; its full sequence is Integrator complex subunit 5-like protein (1563 aa).

Basic and acidic residues-rich tracts occupy residues 1-21 and 31-44; these read MKEE…RNDN and EDWR…KNEN. 3 disordered regions span residues 1-63, 102-208, and 270-310; these read MKEE…YDDD, KKSK…NITY, and NSLN…QQNP. The span at 52–63 shows a compositional bias: acidic residues; it reads GDSDDDDYYDDD. Composition is skewed to low complexity over residues 109–133 and 141–202; these read TAAT…TATA and NNLL…NNNN. Residues 350-370 traverse the membrane as a helical segment; it reads DSIINWSLSTLTIITRLLIIL. Residues 381-398 show a composition bias toward low complexity; it reads QQQQQQQQQQQQQQQQQQ. Disordered regions lie at residues 381 to 417, 466 to 498, 637 to 694, and 784 to 828; these read QQQQ…RQPI, SKSS…SSKT, FDNN…DNSS, and ILNN…SQEI. The span at 405-414 shows a compositional bias: pro residues; that stretch reads FPPPPPPPLR. Low complexity-rich tracts occupy residues 468-496, 639-686, and 786-824; these read SSSS…SSSS, NNNN…NNNN, and NNNN…QQQQ. Residues 877-897 traverse the membrane as a helical segment; the sequence is IIIKLISLIGMDSIYSSLIIL. 2 disordered regions span residues 1154 to 1173 and 1268 to 1303; these read SGNF…DEYG and KQRM…DQNE. Residues 1160-1172 are compositionally biased toward acidic residues; sequence GDDDDDEYGDDEY. A compositionally biased stretch (low complexity) spans 1277-1288; it reads SIQQNGNINNEQ. The segment covering 1289 to 1303 has biased composition (acidic residues); that stretch reads QQEEDDNDDADDQNE.

This sequence belongs to the Integrator subunit 5 family. Component of the Integrator complex. The core complex associates with protein phosphatase 2A subunits, to form the Integrator-PP2A (INTAC) complex.

The protein resides in the nucleus. Its subcellular location is the cytoplasm. It is found in the nucleus membrane. Functionally, component of the integrator complex, a multiprotein complex that terminates RNA polymerase II (Pol II) transcription in the promoter-proximal region of genes. The integrator complex provides a quality checkpoint during transcription elongation by driving premature transcription termination of transcripts that are unfavorably configured for transcriptional elongation: the complex terminates transcription by (1) catalyzing dephosphorylation of the C-terminal domain (CTD) of Pol II subunit polr2a, (2) degrading the exiting nascent RNA transcript via endonuclease activity and (3) promoting the release of Pol II from bound DNA. The integrator complex is also involved in terminating the synthesis of non-coding Pol II transcripts, such as enhancer RNAs (eRNAs), small nuclear RNAs (snRNAs), telomerase RNAs and long non-coding RNAs (lncRNAs). The polypeptide is Integrator complex subunit 5-like protein (Dictyostelium discoideum (Social amoeba)).